Here is a 326-residue protein sequence, read N- to C-terminus: Adenosine receptor A1 (326 aa).

At 1-10 the chain is on the extracellular side; that stretch reads MPPYISAFQA. A helical transmembrane segment spans residues 11–33; it reads AYIGIEVLIALVSVPGNVLVIWA. The Cytoplasmic portion of the chain corresponds to 34-46; it reads VKVNQALRDATFC. Residues 47–69 form a helical membrane-spanning segment; it reads FIVSLAVADVAVGALVIPLAILI. Topologically, residues 70-80 are extracellular; the sequence is NIGPQTYFHTC. The cysteines at positions 80 and 169 are disulfide-linked. A helical transmembrane segment spans residues 81–102; it reads LMVACPVLILTQSSILALLAIA. Residues 103-123 lie on the Cytoplasmic side of the membrane; the sequence is VDRYLRVKIPLRYKTVVTQRR. A helical membrane pass occupies residues 124–146; sequence AAVAIAGCWILSLVVGLTPMFGW. At 147–176 the chain is on the extracellular side; that stretch reads NNLSVVEQDWRANGSVGEPVIKCEFEKVIS. Residues asparagine 148 and asparagine 159 are each glycosylated (N-linked (GlcNAc...) asparagine). The chain crosses the membrane as a helical span at residues 177–201; sequence MEYMVYFNFFVWVLPPLLLMVLIYL. Topologically, residues 202–235 are cytoplasmic; it reads EVFYLIRKQLNKKVSASSGDPQKYYGKELKIAKS. Residues 236-259 form a helical membrane-spanning segment; that stretch reads LALILFLFALSWLPLHILNCITLF. Topologically, residues 260–267 are extracellular; sequence CPTCQKPS. A helical transmembrane segment spans residues 268–292; it reads ILIYIAIFLTHGNSAMNPIVYAFRI. Residues 293-326 are Cytoplasmic-facing; the sequence is HKFRVTFLKIWNDHFRCQPKPPIDEDLPEEKAED. Cysteine 309 carries the S-palmitoyl cysteine lipid modification.

Belongs to the G-protein coupled receptor 1 family. As to expression, widely expressed in brain and spinal cord.

It localises to the cell membrane. In terms of biological role, receptor for adenosine. The activity of this receptor is mediated by G proteins which inhibit adenylyl cyclase. In Rattus norvegicus (Rat), this protein is Adenosine receptor A1 (Adora1).